Here is a 428-residue protein sequence, read N- to C-terminus: Light-independent protochlorophyllide reductase subunit N (428 aa).

C29, C54, and C115 together coordinate [4Fe-4S] cluster.

This sequence belongs to the BchN/ChlN family. Protochlorophyllide reductase is composed of three subunits; BchL, BchN and BchB. Forms a heterotetramer of two BchB and two BchN subunits. It depends on [4Fe-4S] cluster as a cofactor.

The enzyme catalyses chlorophyllide a + oxidized 2[4Fe-4S]-[ferredoxin] + 2 ADP + 2 phosphate = protochlorophyllide a + reduced 2[4Fe-4S]-[ferredoxin] + 2 ATP + 2 H2O. It participates in porphyrin-containing compound metabolism; bacteriochlorophyll biosynthesis (light-independent). Component of the dark-operative protochlorophyllide reductase (DPOR) that uses Mg-ATP and reduced ferredoxin to reduce ring D of protochlorophyllide (Pchlide) to form chlorophyllide a (Chlide). This reaction is light-independent. The NB-protein (BchN-BchB) is the catalytic component of the complex. The sequence is that of Light-independent protochlorophyllide reductase subunit N from Cereibacter sphaeroides (strain KD131 / KCTC 12085) (Rhodobacter sphaeroides).